A 455-amino-acid chain; its full sequence is Bifunctional protein GlmU (455 aa).

The tract at residues methionine 1–arginine 226 is pyrophosphorylase. Residues leucine 8 to glycine 11, lysine 22, glutamine 73, glycine 78 to threonine 79, tyrosine 99 to aspartate 101, glycine 136, glutamate 151, asparagine 166, and asparagine 224 contribute to the UDP-N-acetyl-alpha-D-glucosamine site. Position 101 (aspartate 101) interacts with Mg(2+). Residue asparagine 224 coordinates Mg(2+). A linker region spans residues threonine 227–lysine 247. The N-acetyltransferase stretch occupies residues glycine 248–lysine 455. Residues arginine 330 and lysine 348 each coordinate UDP-N-acetyl-alpha-D-glucosamine. Histidine 360 (proton acceptor) is an active-site residue. Residues tyrosine 363 and asparagine 374 each contribute to the UDP-N-acetyl-alpha-D-glucosamine site. Acetyl-CoA contacts are provided by residues alanine 377, asparagine 383–tyrosine 384, serine 402, alanine 420, and arginine 437.

The protein in the N-terminal section; belongs to the N-acetylglucosamine-1-phosphate uridyltransferase family. It in the C-terminal section; belongs to the transferase hexapeptide repeat family. In terms of assembly, homotrimer. The cofactor is Mg(2+).

The protein resides in the cytoplasm. The enzyme catalyses alpha-D-glucosamine 1-phosphate + acetyl-CoA = N-acetyl-alpha-D-glucosamine 1-phosphate + CoA + H(+). It carries out the reaction N-acetyl-alpha-D-glucosamine 1-phosphate + UTP + H(+) = UDP-N-acetyl-alpha-D-glucosamine + diphosphate. It participates in nucleotide-sugar biosynthesis; UDP-N-acetyl-alpha-D-glucosamine biosynthesis; N-acetyl-alpha-D-glucosamine 1-phosphate from alpha-D-glucosamine 6-phosphate (route II): step 2/2. The protein operates within nucleotide-sugar biosynthesis; UDP-N-acetyl-alpha-D-glucosamine biosynthesis; UDP-N-acetyl-alpha-D-glucosamine from N-acetyl-alpha-D-glucosamine 1-phosphate: step 1/1. Its pathway is bacterial outer membrane biogenesis; LPS lipid A biosynthesis. Catalyzes the last two sequential reactions in the de novo biosynthetic pathway for UDP-N-acetylglucosamine (UDP-GlcNAc). The C-terminal domain catalyzes the transfer of acetyl group from acetyl coenzyme A to glucosamine-1-phosphate (GlcN-1-P) to produce N-acetylglucosamine-1-phosphate (GlcNAc-1-P), which is converted into UDP-GlcNAc by the transfer of uridine 5-monophosphate (from uridine 5-triphosphate), a reaction catalyzed by the N-terminal domain. This chain is Bifunctional protein GlmU, found in Francisella tularensis subsp. tularensis (strain SCHU S4 / Schu 4).